Consider the following 149-residue polypeptide: Ribonuclease HI (149 aa).

The region spanning 1–142 (MTPKVTIYTD…ADALANEGLR (142 aa)) is the RNase H type-1 domain. Positions 10, 48, 70, and 134 each coordinate Mg(2+).

The protein belongs to the RNase H family. As to quaternary structure, monomer. Mg(2+) is required as a cofactor.

Its subcellular location is the cytoplasm. It carries out the reaction Endonucleolytic cleavage to 5'-phosphomonoester.. Endonuclease that specifically degrades the RNA of RNA-DNA hybrids. The protein is Ribonuclease HI of Caulobacter vibrioides (strain ATCC 19089 / CIP 103742 / CB 15) (Caulobacter crescentus).